Reading from the N-terminus, the 303-residue chain is 4-hydroxy-3-methylbut-2-enyl diphosphate reductase (303 aa).

[4Fe-4S] cluster is bound at residue Cys-12. (2E)-4-hydroxy-3-methylbut-2-enyl diphosphate is bound by residues His-42 and His-75. Residues His-42 and His-75 each contribute to the dimethylallyl diphosphate site. Isopentenyl diphosphate contacts are provided by His-42 and His-75. Cys-97 contacts [4Fe-4S] cluster. His-125 serves as a coordination point for (2E)-4-hydroxy-3-methylbut-2-enyl diphosphate. Dimethylallyl diphosphate is bound at residue His-125. His-125 is an isopentenyl diphosphate binding site. The Proton donor role is filled by Glu-127. Ser-164 is a (2E)-4-hydroxy-3-methylbut-2-enyl diphosphate binding site. Cys-192 is a [4Fe-4S] cluster binding site. Positions 220, 221, 222, and 264 each coordinate (2E)-4-hydroxy-3-methylbut-2-enyl diphosphate. Residues Ser-220, Ser-221, Asn-222, and Ser-264 each contribute to the dimethylallyl diphosphate site. Residues Ser-220, Ser-221, Asn-222, and Ser-264 each contribute to the isopentenyl diphosphate site.

This sequence belongs to the IspH family. It depends on [4Fe-4S] cluster as a cofactor.

It carries out the reaction isopentenyl diphosphate + 2 oxidized [2Fe-2S]-[ferredoxin] + H2O = (2E)-4-hydroxy-3-methylbut-2-enyl diphosphate + 2 reduced [2Fe-2S]-[ferredoxin] + 2 H(+). The enzyme catalyses dimethylallyl diphosphate + 2 oxidized [2Fe-2S]-[ferredoxin] + H2O = (2E)-4-hydroxy-3-methylbut-2-enyl diphosphate + 2 reduced [2Fe-2S]-[ferredoxin] + 2 H(+). The protein operates within isoprenoid biosynthesis; dimethylallyl diphosphate biosynthesis; dimethylallyl diphosphate from (2E)-4-hydroxy-3-methylbutenyl diphosphate: step 1/1. It participates in isoprenoid biosynthesis; isopentenyl diphosphate biosynthesis via DXP pathway; isopentenyl diphosphate from 1-deoxy-D-xylulose 5-phosphate: step 6/6. Its function is as follows. Catalyzes the conversion of 1-hydroxy-2-methyl-2-(E)-butenyl 4-diphosphate (HMBPP) into a mixture of isopentenyl diphosphate (IPP) and dimethylallyl diphosphate (DMAPP). Acts in the terminal step of the DOXP/MEP pathway for isoprenoid precursor biosynthesis. The sequence is that of 4-hydroxy-3-methylbut-2-enyl diphosphate reductase from Neorickettsia sennetsu (strain ATCC VR-367 / Miyayama) (Ehrlichia sennetsu).